Reading from the N-terminus, the 423-residue chain is NADP-specific glutamate dehydrogenase (423 aa).

Residue K112 is part of the active site.

The protein belongs to the Glu/Leu/Phe/Val dehydrogenases family. Homohexamer.

It carries out the reaction L-glutamate + NADP(+) + H2O = 2-oxoglutarate + NH4(+) + NADPH + H(+). The sequence is that of NADP-specific glutamate dehydrogenase (gdhA) from Saccharolobus shibatae (strain ATCC 51178 / DSM 5389 / JCM 8931 / NBRC 15437 / B12) (Sulfolobus shibatae).